A 224-amino-acid chain; its full sequence is UPF0758 protein Tbd_2588 (224 aa).

Residues 102 to 224 (ALSSPAAVRD…ALSFAEAGHL (123 aa)) form the MPN domain. His173, His175, and Asp186 together coordinate Zn(2+). The JAMM motif signature appears at 173 to 186 (HNHPSGVNEPSQAD).

The protein belongs to the UPF0758 family.

This Thiobacillus denitrificans (strain ATCC 25259 / T1) protein is UPF0758 protein Tbd_2588.